Here is a 524-residue protein sequence, read N- to C-terminus: Citrate exporter 1 (524 aa).

The disordered stretch occupies residues 1 to 49 (MSSTTSSSRSDLEKVPVPQVTPRDSDSDKGSLSPEPSTLEAQSSEKPPH). Polar residues predominate over residues 34–45 (PEPSTLEAQSSE). The chain crosses the membrane as a helical span at residues 60–80 (MVCIVSLAAIFSPLSSNIYFP). N-linked (GlcNAc...) asparagine glycosylation occurs at N90. 5 helical membrane-spanning segments follow: residues 95–115 (LATLTITVYMIVQGLAPSFWG), 125–145 (PVFIGTFIVYLVANIALAESK), 155–175 (ALQAAGSAATISIGAGVIGDI), 186–206 (GIFGGVRMLGQGIGPVFGGIF), and 215–235 (IFWFLTIAGGVSLLSILVLLP). N244 carries N-linked (GlcNAc...) asparagine glycosylation. 6 consecutive transmembrane segments (helical) span residues 296-316 (VFITLFFGSIVYTVWSMVTSS), 332-352 (IGLTFLGNGFGCMSGSYLVGY), 395-415 (TWWVIAIFIVTVALYGVSLRT), 417-437 (LAVPIILQYFIAFCSTGLFTI), 459-479 (LMRCLLGAGGVAIVQPILDAL), and 481-501 (PDYTFLLLAGITLVMTPLLYV).

This sequence belongs to the major facilitator superfamily.

The protein resides in the cell membrane. The enzyme catalyses citrate(in) = citrate(out). In terms of biological role, transmembrane transporter that exports citrate across the cell membrane. In Aspergillus niger (strain ATCC 1015 / CBS 113.46 / FGSC A1144 / LSHB Ac4 / NCTC 3858a / NRRL 328 / USDA 3528.7), this protein is Citrate exporter 1.